The following is a 1055-amino-acid chain: Leukotoxin (1055 aa).

A coiled-coil region spans residues 11–49 (QQAAQFANSVADRAKENIDAAKEQLQKALDKLGKTGKKL). 2 cholesterol recognition/amino acid consensus (CRAC) region regions span residues 334–340 (LEEYSKR) and 502–506 (VDYLK). Hemolysin-type calcium-binding repeat units lie at residues 721-738 (IGSTLRDKFYGSKFNDVF), 739-756 (HGHDGDDLIYGYDGDDRL), 757-774 (YGDNGNDEIHGGQGNDKL), 775-792 (YGGAGNDRLFGEYGNNYL), 793-810 (DGGEGDDHLEGGNGSDIL), 811-828 (RGGSGNDKLFGNQGDDLL), and 829-846 (DGGEGDDQLAGGEGNDIY). Positions 795-815 (GEGDDHLEGGNGSDILRGGSG) are disordered. The tract at residues 990–1009 (KGKSSSLMSSSRSSSMLTQK) is disordered. Low complexity predominate over residues 993–1006 (SSSLMSSSRSSSML).

It belongs to the RTX prokaryotic toxin (TC 1.C.11) family. In terms of assembly, interacts specifically with the superoxide dismutase [Cu-Zn]. This interaction may protect LtxA from reactive oxygen species and reactive nitrogen species produced by host inflammatory cells during disease. Interacts with the human leukocyte adhesion glycoprotein LFA-1 (ITGAL-ITGB2). Acylated at Lys-562 and Lys-687 by LtxC. This modification is required for full activity. Isolated methyl esters contain palmitoyl and palmitolyl fatty acyl groups with smaller quantities of myristic and stearic fatty acids.

It is found in the cell outer membrane. It localises to the secreted. Virulence factor that plays an important role in immune evasion. Lyses human lymphocytes and monocytes. Binds to the LFA-1 integrin on the surface of the host cell and to cholesterol-containing membranes, which probably results in large LtxA-LFA-1 clusters in lipid rafts. Also shows beta-hemolytic activity on certain types of growth media. This Aggregatibacter actinomycetemcomitans (Actinobacillus actinomycetemcomitans) protein is Leukotoxin.